Reading from the N-terminus, the 303-residue chain is N-acetyl-D-glucosamine kinase (303 aa).

Residues G4–K11 and G133–F140 contribute to the ATP site. 4 residues coordinate Zn(2+): H157, C177, C179, and C184.

Belongs to the ROK (NagC/XylR) family. NagK subfamily.

The catalysed reaction is N-acetyl-D-glucosamine + ATP = N-acetyl-D-glucosamine 6-phosphate + ADP + H(+). It functions in the pathway cell wall biogenesis; peptidoglycan recycling. In terms of biological role, catalyzes the phosphorylation of N-acetyl-D-glucosamine (GlcNAc) derived from cell-wall degradation, yielding GlcNAc-6-P. This Escherichia coli (strain K12 / DH10B) protein is N-acetyl-D-glucosamine kinase.